The primary structure comprises 472 residues: Serine/threonine-protein phosphatase T (472 aa).

3 TPR repeats span residues Ala-7–Pro-40, Thr-41–Phe-73, and Ala-74–Asn-107. Residues Asp-217, His-219, Asp-246, and Asn-278 each contribute to the Mn(2+) site. Catalysis depends on His-279, which acts as the Proton donor/acceptor. 2 residues coordinate Mn(2+): His-327 and His-403.

It belongs to the PPP phosphatase family. PP-5 (PP-T) subfamily. Requires Mg(2+) as cofactor. Mn(2+) serves as cofactor.

It is found in the cytoplasm. The protein localises to the cytosol. It localises to the nucleus. It carries out the reaction O-phospho-L-seryl-[protein] + H2O = L-seryl-[protein] + phosphate. The catalysed reaction is O-phospho-L-threonyl-[protein] + H2O = L-threonyl-[protein] + phosphate. Activated by arachidonic acid. In terms of biological role, may function as a protein phosphatase. The sequence is that of Serine/threonine-protein phosphatase T from Trypanosoma brucei brucei (strain 927/4 GUTat10.1).